Here is a 194-residue protein sequence, read N- to C-terminus: 5'-deoxynucleotidase VV1113 (194 aa).

Substrate-binding positions include 18 to 19 (RW) and H33. Residues 30 to 142 (VSEHSLQVAF…VKQADSICAY (113 aa)) form the HD domain. Positions 33, 68, and 69 each coordinate a divalent metal cation. Substrate-binding positions include D69, 77 to 80 (DLPT), and D137. Position 137 (D137) interacts with a divalent metal cation.

The protein belongs to the 5DNU family. Homodimer. A divalent metal cation serves as cofactor.

Its subcellular location is the cytoplasm. It carries out the reaction a 2'-deoxyribonucleoside 5'-phosphate + H2O = a 2'-deoxyribonucleoside + phosphate. Catalyzes the strictly specific dephosphorylation of 2'-deoxyribonucleoside 5'-monophosphates. This Vibrio vulnificus (strain YJ016) protein is 5'-deoxynucleotidase VV1113.